A 144-amino-acid chain; its full sequence is Transcription antitermination protein NusB (144 aa).

Belongs to the NusB family.

Functionally, involved in transcription antitermination. Required for transcription of ribosomal RNA (rRNA) genes. Binds specifically to the boxA antiterminator sequence of the ribosomal RNA (rrn) operons. This chain is Transcription antitermination protein NusB, found in Paraburkholderia phytofirmans (strain DSM 17436 / LMG 22146 / PsJN) (Burkholderia phytofirmans).